Consider the following 286-residue polypeptide: MKRKGVGFSLPVTVVMLVIGFIYFASVFTFIDRWFSLTSSPGIANAAAFTALALMCIYNYSIAVFRDPGRVPLNYMPDVEDPESPVHEIKRKGGDLRYCQKCSHFKPPRAHHCRVCKRCVLRMDHHCIWINNCVGHTNYKVFFVFVVYAVTACVYSLVLLVGSLTVEPQDEEEEMGSYLRTIYVISAFLLIPLSIALGVLLGWHIYLILQNKTTIEYHEGVRAMWLAEKGGQVYKHPYDIGAYENLTLILGPNILSWLCPTSRHIGSGVRFRTAFDSIPDSSETKH.

2 helical membrane passes run 11-31 (PVTV…FTFI) and 45-65 (NAAA…IAVF). Positions 97 to 147 (RYCQKCSHFKPPRAHHCRVCKRCVLRMDHHCIWINNCVGHTNYKVFFVFVV) constitute a DHHC domain. Residue cysteine 127 is the S-palmitoyl cysteine intermediate of the active site. The next 2 helical transmembrane spans lie at 141-161 (VFFV…VLLV) and 182-202 (IYVI…VLLG).

This sequence belongs to the DHHC palmitoyltransferase family.

It is found in the golgi apparatus membrane. It carries out the reaction L-cysteinyl-[protein] + hexadecanoyl-CoA = S-hexadecanoyl-L-cysteinyl-[protein] + CoA. Functionally, palmitoyl acyltransferase. The sequence is that of Probable protein S-acyltransferase 16 (PAT16) from Arabidopsis thaliana (Mouse-ear cress).